Consider the following 639-residue polypeptide: UvrABC system protein C (639 aa).

The 79-residue stretch at 31–109 (EQAGVYRMYD…IKKYQPKYNI (79 aa)) folds into the GIY-YIG domain. The region spanning 218 to 253 (SAVIEQLVARMELASNELHFELAAKYRDQIVTLRKV) is the UVR domain.

The protein belongs to the UvrC family. Interacts with UvrB in an incision complex.

It localises to the cytoplasm. Its function is as follows. The UvrABC repair system catalyzes the recognition and processing of DNA lesions. UvrC both incises the 5' and 3' sides of the lesion. The N-terminal half is responsible for the 3' incision and the C-terminal half is responsible for the 5' incision. This is UvrABC system protein C from Colwellia psychrerythraea (strain 34H / ATCC BAA-681) (Vibrio psychroerythus).